Here is a 760-residue protein sequence, read N- to C-terminus: Cyclin-D-binding Myb-like transcription factor 1 (760 aa).

Residues 1-237 (MSTVEEDSDT…TPEEIEKLKE (237 aa)) form an interaction with CCND2 region. Residues 24–63 (DTDGNLILHCPQNDPDEIDSEDSTEPPHKRLCLSSEDDQS) form a disordered region. Over residues 37 to 47 (DPDEIDSEDST) the composition is skewed to acidic residues. The required for transcriptional activation stretch occupies residues 87-170 (VTMTATTEVA…IDILMNNIER (84 aa)). The segment at 87–458 (VTMTATTEVA…DNTAISPSPM (372 aa)) is required for DNA-binding. The interaction with CCND1, CCND2 and CCND3 stretch occupies residues 176–690 (GIKDATEIIF…PTIVHQVHQT (515 aa)). The region spanning 225–263 (GKYTPEEIEKLKELRIKHGNDWATIGAALGRSASSVKDR) is the Myb-like 1 domain. Residues 268–333 (KDTCNTGKWT…KWLNYLNWKQ (66 aa)) form the HTH myb-type domain. The H-T-H motif DNA-binding region spans 306 to 329 (WAAVAERVGTRSEKQCRSKWLNYL). The 50-residue stretch at 339–388 (WTKEDEINLILRIAELDVADENDINWDLLAEGWSSVRSPQWLRSKWWTIK) folds into the Myb-like 2 domain. Residues 459–760 (AALQIPVQIT…KDVEDLVNCH (302 aa)) form a required for transcriptional activation region. 2 disordered regions span residues 593–614 (DSDL…DTFP) and 738–760 (IGSS…VNCH).

Belongs to the DMTF1 family. As to quaternary structure, interacts with the D-type cyclins CCND1, CCND2 and CCND3. Interaction with D-type cyclins may modulate transcriptional activation by this protein. Phosphorylated by the cyclin-D2/CDK4, cyclin-D3/CDK4 and cyclin-D2/CDK6 complexes and to a lesser extent by the cyclin-D1/CDK4 complex.

The protein resides in the nucleus. Its function is as follows. Transcriptional activator which activates the CDKN2A/ARF locus in response to Ras-Raf signaling, thereby promoting p53/TP53-dependent growth arrest. Binds to the consensus sequence 5'-CCCG[GT]ATGT-3'. The chain is Cyclin-D-binding Myb-like transcription factor 1 (Dmtf1) from Rattus norvegicus (Rat).